Consider the following 402-residue polypeptide: UDP-N-acetylmuramoylalanine--D-glutamate ligase (402 aa).

97 to 103 (GTNGKTT) contributes to the ATP binding site.

This sequence belongs to the MurCDEF family.

It localises to the cytoplasm. It carries out the reaction UDP-N-acetyl-alpha-D-muramoyl-L-alanine + D-glutamate + ATP = UDP-N-acetyl-alpha-D-muramoyl-L-alanyl-D-glutamate + ADP + phosphate + H(+). Its pathway is cell wall biogenesis; peptidoglycan biosynthesis. Functionally, cell wall formation. Catalyzes the addition of glutamate to the nucleotide precursor UDP-N-acetylmuramoyl-L-alanine (UMA). The polypeptide is UDP-N-acetylmuramoylalanine--D-glutamate ligase (Campylobacter jejuni (strain RM1221)).